We begin with the raw amino-acid sequence, 281 residues long: RAD52 motif-containing protein 1 (281 aa).

Residues 1–92 (MAELISFVVP…KPLFQTSPVK (92 aa)) are necessary for nuclear localization and for nucleolar accumulation in response to heat shock. The 84-residue stretch at 15 to 98 (KVLLVWDLST…SPVKVRLGTR (84 aa)) folds into the RRM domain. Positions 90 to 133 (PVKVRLGTRHKALQHQAFALNSSRCQELANYYFGFSGWSKRIIK) are necessary for nuclear and nucleolar localization.

As to quaternary structure, homodimer.

Its subcellular location is the nucleus. It localises to the cytoplasm. The protein localises to the nucleolus. It is found in the cajal body. The protein resides in the PML body. Functionally, may confer resistance to the antitumor agent cisplatin. Binds to DNA and RNA. This chain is RAD52 motif-containing protein 1 (Rdm1), found in Mus musculus (Mouse).